The primary structure comprises 455 residues: tRNA-2-methylthio-N(6)-dimethylallyladenosine synthase (455 aa).

In terms of domain architecture, MTTase N-terminal spans 3 to 117; that stretch reads KGLYIESYGC…LPELIMKATR (115 aa). Cys12, Cys48, Cys80, Cys155, Cys159, and Cys162 together coordinate [4Fe-4S] cluster. In terms of domain architecture, Radical SAM core spans 141–375; sequence VSRGVSAFVS…LLTQQRLFTK (235 aa).

This sequence belongs to the methylthiotransferase family. MiaB subfamily. As to quaternary structure, monomer. It depends on [4Fe-4S] cluster as a cofactor.

The protein localises to the cytoplasm. It catalyses the reaction N(6)-dimethylallyladenosine(37) in tRNA + (sulfur carrier)-SH + AH2 + 2 S-adenosyl-L-methionine = 2-methylsulfanyl-N(6)-dimethylallyladenosine(37) in tRNA + (sulfur carrier)-H + 5'-deoxyadenosine + L-methionine + A + S-adenosyl-L-homocysteine + 2 H(+). In terms of biological role, catalyzes the methylthiolation of N6-(dimethylallyl)adenosine (i(6)A), leading to the formation of 2-methylthio-N6-(dimethylallyl)adenosine (ms(2)i(6)A) at position 37 in tRNAs that read codons beginning with uridine. In Anaplasma marginale (strain St. Maries), this protein is tRNA-2-methylthio-N(6)-dimethylallyladenosine synthase.